We begin with the raw amino-acid sequence, 369 residues long: Protein VP6 (369 aa).

Positions 20-208 (LEQRSIAPLL…EEAKVGGGDR (189 aa)) are disordered. Positions 29 to 66 (LREKNSTEAKSKLKEDGEKKNKSEKEENKIHDDRRVES) are enriched in basic and acidic residues. Composition is skewed to gly residues over residues 92–111 (TGGG…GGVG) and 162–171 (TSGGLQGRGG). Residues 196–208 (TEGEEAKVGGGDR) show a composition bias toward basic and acidic residues.

This sequence belongs to the orbivirus VP6 family.

It localises to the virion. This African horse sickness virus 3 (AHSV-3) protein is Protein VP6 (S9).